The following is a 255-amino-acid chain: Probable transcriptional regulator ycf27 (255 aa).

The Response regulatory domain maps to 9–122 (KILIADDESS…ELEARIRCVL (114 aa)). Asp-58 carries the 4-aspartylphosphate modification. The H-T-H motif DNA-binding region spans 78–96 (DIPIIMLTALGDVTDRITG). Positions 137–238 (SGIINIGFLK…SRGTGYLFQR (102 aa)) form a DNA-binding region, ompR/PhoB-type.

Its subcellular location is the plastid. It localises to the chloroplast. Its function is as follows. Probable promoter-specific protein mediating the interaction between DNA and RNA polymerase. This Galdieria sulphuraria (Red alga) protein is Probable transcriptional regulator ycf27 (ycf27).